Here is a 272-residue protein sequence, read N- to C-terminus: Cytochrome b-c1 complex subunit Rieske-2, mitochondrial (272 aa).

Residues 1–60 constitute a mitochondrion transit peptide; it reads MLRIAGRRASSLSRWPVRSVAPSSSAFISANHFSSDDDSSSPRSISPSLASVFLHHTRGF. The Mitochondrial matrix portion of the chain corresponds to 61–109; sequence SSNSVSHAHDMGLVPDLPPTVAAIKNPTSKIVYDEHNHERYPPGDPSKR. Residues 110-132 form a helical membrane-spanning segment; that stretch reads AFAYFVLTGGRFVYASLVRLLIL. At 133–272 the chain is on the mitochondrial intermembrane side; that stretch reads KFVLSMSASK…FLEENKLLIG (140 aa). In terms of domain architecture, Rieske spans 182-270; sequence INLANSVDLG…YSFLEENKLL (89 aa). 4 residues coordinate [2Fe-2S] cluster: C215, H217, C234, and H237. A disulfide bridge connects residues C220 and C236.

The protein belongs to the Rieske iron-sulfur protein family. As to quaternary structure, component of the ubiquinol-cytochrome c oxidoreductase (cytochrome b-c1 complex, complex III, CIII), a multisubunit enzyme composed of 3 respiratory subunits cytochrome b, cytochrome c1 and Rieske protein, 2 core protein subunits, and several low-molecular weight protein subunits. The complex exists as an obligatory dimer and forms supercomplexes (SCs) in the inner mitochondrial membrane with cytochrome c oxidase (complex IV, CIV). The cofactor is [2Fe-2S] cluster. As to expression, high levels are seen in the flowers while a low level expression is seen in the roots, leaves and stems.

The protein localises to the mitochondrion inner membrane. It carries out the reaction a quinol + 2 Fe(III)-[cytochrome c](out) = a quinone + 2 Fe(II)-[cytochrome c](out) + 2 H(+)(out). Functionally, component of the ubiquinol-cytochrome c oxidoreductase, a multisubunit transmembrane complex that is part of the mitochondrial electron transport chain which drives oxidative phosphorylation. The respiratory chain contains 3 multisubunit complexes succinate dehydrogenase (complex II, CII), ubiquinol-cytochrome c oxidoreductase (cytochrome b-c1 complex, complex III, CIII) and cytochrome c oxidase (complex IV, CIV), that cooperate to transfer electrons derived from NADH and succinate to molecular oxygen, creating an electrochemical gradient over the inner membrane that drives transmembrane transport and the ATP synthase. The cytochrome b-c1 complex catalyzes electron transfer from ubiquinol to cytochrome c, linking this redox reaction to translocation of protons across the mitochondrial inner membrane, with protons being carried across the membrane as hydrogens on the quinol. In the process called Q cycle, 2 protons are consumed from the matrix, 4 protons are released into the intermembrane space and 2 electrons are passed to cytochrome c. The Rieske protein is a catalytic core subunit containing a [2Fe-2S] iron-sulfur cluster. It cycles between 2 conformational states during catalysis to transfer electrons from the quinol bound in the Q(0) site in cytochrome b to cytochrome c1. This is Cytochrome b-c1 complex subunit Rieske-2, mitochondrial from Nicotiana tabacum (Common tobacco).